Consider the following 103-residue polypeptide: Protein RALF-like 18 (103 aa).

The N-terminal stretch at 1-32 (MMNNMKLLIIAVMIISAALLPALVVGSRPVKC) is a signal peptide. The propeptide at 33-58 (DNCMDGGEKEEIMKMSSGVDVSHRIL) is removed in mature form. A disulfide bridge connects residues Cys92 and Cys98.

This sequence belongs to the plant rapid alkalinization factor (RALF) family. Post-translationally, proteolytically cleaved, probably by S1P, a subtilisin-like serine protease (subtilase).

The protein localises to the secreted. Cell signaling peptide that may regulate plant stress, growth, and development. Mediates a rapid alkalinization of extracellular space by mediating a transient increase in the cytoplasmic Ca(2+) concentration leading to a calcium-dependent signaling events through a cell surface receptor and a concomitant activation of some intracellular mitogen-activated protein kinases. This is Protein RALF-like 18 (RALFL18) from Arabidopsis thaliana (Mouse-ear cress).